A 209-amino-acid polypeptide reads, in one-letter code: Dual specificity protein phosphatase 22 (209 aa).

The Tyrosine-protein phosphatase domain maps to 4–144; the sequence is GMNKILTGLF…LEDFGKCEVH (141 aa). The Phosphocysteine intermediate role is filled by Cys-88. A disordered region spans residues 169 to 192; it reads LDKHKQQEAAESQNATSSGRQWNS. Residues 177 to 190 are compositionally biased toward polar residues; that stretch reads AAESQNATSSGRQW.

The protein belongs to the protein-tyrosine phosphatase family. Non-receptor class dual specificity subfamily.

The protein localises to the cytoplasm. It is found in the nucleus. The catalysed reaction is O-phospho-L-tyrosyl-[protein] + H2O = L-tyrosyl-[protein] + phosphate. It carries out the reaction O-phospho-L-seryl-[protein] + H2O = L-seryl-[protein] + phosphate. The enzyme catalyses O-phospho-L-threonyl-[protein] + H2O = L-threonyl-[protein] + phosphate. In terms of biological role, activates the Jnk signaling pathway. Dephosphorylates and deactivates p38 and stress-activated protein kinase/c-Jun N-terminal kinase (SAPK/JNK). This Xenopus laevis (African clawed frog) protein is Dual specificity protein phosphatase 22 (dusp22).